The following is a 1199-amino-acid chain: Nucleolar protein 6 (1199 aa).

A compositionally biased stretch (basic residues) spans 1-10; it reads MLRNKRKAGK. Disordered stretches follow at residues 1–51 and 1146–1199; these read MLRN…EPKP and KREQ…KALK. 2 stretches are compositionally biased toward basic and acidic residues: residues 28 to 37 and 1146 to 1169; these read HAEDHSDLEH and KREQ…EKST.

The protein belongs to the NRAP family. In terms of assembly, part of the small subunit (SSU) processome, composed of more than 70 proteins and the RNA chaperone small nucleolar RNA (snoRNA) U3.

Its subcellular location is the nucleus. The protein resides in the nucleolus. It localises to the chromosome. Part of the small subunit (SSU) processome, first precursor of the small eukaryotic ribosomal subunit. During the assembly of the SSU processome in the nucleolus, many ribosome biogenesis factors, an RNA chaperone and ribosomal proteins associate with the nascent pre-rRNA and work in concert to generate RNA folding, modifications, rearrangements and cleavage as well as targeted degradation of pre-ribosomal RNA by the RNA exosome. This Drosophila yakuba (Fruit fly) protein is Nucleolar protein 6.